A 187-amino-acid chain; its full sequence is Early E3 20.6 kDa glycoprotein (187 aa).

N-linked (GlcNAc...) asparagine; by host glycans are attached at residues N30, N73, N117, N134, and N135.

The protein belongs to the adenoviridae E3_20 family.

This is Early E3 20.6 kDa glycoprotein from Human adenovirus B serotype 11 (strain Slobiski) (HAdV-11).